A 115-amino-acid chain; its full sequence is Large ribosomal subunit protein bL19 (115 aa).

It belongs to the bacterial ribosomal protein bL19 family.

Its function is as follows. This protein is located at the 30S-50S ribosomal subunit interface and may play a role in the structure and function of the aminoacyl-tRNA binding site. This chain is Large ribosomal subunit protein bL19, found in Bacillus velezensis (strain DSM 23117 / BGSC 10A6 / LMG 26770 / FZB42) (Bacillus amyloliquefaciens subsp. plantarum).